The following is a 151-amino-acid chain: Small ribosomal subunit protein uS15 (151 aa).

Belongs to the universal ribosomal protein uS15 family.

The polypeptide is Small ribosomal subunit protein uS15 (RPS13) (Pisum sativum (Garden pea)).